Here is a 1120-residue protein sequence, read N- to C-terminus: Vacuolar cation-chloride cotransporter 1 (1120 aa).

The segment at Met1–Ser21 is disordered. Residues Met1–Lys62 are Cytoplasmic-facing. Position 34 is a phosphoserine (Ser34). Residues Leu63–Phe83 form a helical membrane-spanning segment. The Vacuolar segment spans residues Leu84 to Arg85. The helical transmembrane segment at Phe86–Tyr106 threads the bilayer. At Thr107–Ser145 the chain is on the cytoplasmic side. The helical transmembrane segment at Ile146 to Ile166 threads the bilayer. The Vacuolar portion of the chain corresponds to Glu167 to His193. A helical membrane pass occupies residues Trp194–Gly214. At Ser215 to Ala221 the chain is on the cytoplasmic side. Residues Gly222–Ile242 traverse the membrane as a helical segment. The Vacuolar portion of the chain corresponds to Arg243–Thr283. A helical membrane pass occupies residues Phe284–Met304. The Cytoplasmic segment spans residues Ser305–Lys317. The helical transmembrane segment at Gly318–Gly338 threads the bilayer. Residues Cys339–Gln360 lie on the Vacuolar side of the membrane. The helical transmembrane segment at Trp361–Gly381 threads the bilayer. The Cytoplasmic portion of the chain corresponds to Ala382 to Asn393. The helical transmembrane segment at Ile394–Ile414 threads the bilayer. Residues Leu415–Phe430 are Vacuolar-facing. A helical membrane pass occupies residues Ile431–Ile451. Residues Ser452–Lys462 are Cytoplasmic-facing. Residues Tyr463 to Ile482 form a helical membrane-spanning segment. At Val483–Ser487 the chain is on the vacuolar side. A helical membrane pass occupies residues Ala488–Ser506. Topologically, residues Pro507 to Leu1120 are cytoplasmic. Residues Ser654, Ser915, and Ser918 each carry the phosphoserine modification.

Belongs to the SLC12A transporter family.

Its subcellular location is the vacuole membrane. Catalyzes the coordinated symport of chloride with potassium ions across the vacuolar membrane. Involved in vacuolar osmoregulation. The polypeptide is Vacuolar cation-chloride cotransporter 1 (Saccharomyces cerevisiae (strain ATCC 204508 / S288c) (Baker's yeast)).